The primary structure comprises 834 residues: Probable receptor-like protein kinase At2g23200 (834 aa).

An N-terminal signal peptide occupies residues 1 to 28 (MENFCFQDSVSLFITIMVLVLLPRLSLS). The Extracellular segment spans residues 29–405 (DTSTYTRPEN…SSSRVHIITG (377 aa)). N-linked (GlcNAc...) asparagine glycosylation is found at N61, N149, N221, N246, N277, N289, N314, N352, N361, and N394. A helical membrane pass occupies residues 406-426 (CAVAAAAASALVFSLLFMVFL). The Cytoplasmic portion of the chain corresponds to 427-834 (KRRRSKKTKP…FSQLKISDAR (408 aa)). In terms of domain architecture, Protein kinase spans 488-761 (FDEQLLIGKG…RDVIWDLEYV (274 aa)). ATP is bound by residues 494-502 (IGKGGFGYV) and K516. D613 functions as the Proton acceptor in the catalytic mechanism.

Belongs to the protein kinase superfamily. Ser/Thr protein kinase family.

It localises to the membrane. The protein is Probable receptor-like protein kinase At2g23200 of Arabidopsis thaliana (Mouse-ear cress).